The chain runs to 452 residues: tRNA modification GTPase MnmE (452 aa).

(6S)-5-formyl-5,6,7,8-tetrahydrofolate is bound by residues Arg28, Glu85, and Lys124. Positions 220–378 (GMNVVLVGRP…LRTELLRAAG (159 aa)) constitute a TrmE-type G domain. Residue Asn230 participates in K(+) binding. Residues 230-235 (NVGKSS), 249-255 (TDVAGTT), 274-277 (DTAG), and 359-361 (SAR) contribute to the GTP site. A Mg(2+)-binding site is contributed by Ser234. K(+) contacts are provided by Thr249, Val251, and Thr254. Thr255 contacts Mg(2+). Lys452 is a (6S)-5-formyl-5,6,7,8-tetrahydrofolate binding site.

The protein belongs to the TRAFAC class TrmE-Era-EngA-EngB-Septin-like GTPase superfamily. TrmE GTPase family. Homodimer. Heterotetramer of two MnmE and two MnmG subunits. K(+) serves as cofactor.

The protein resides in the cytoplasm. In terms of biological role, exhibits a very high intrinsic GTPase hydrolysis rate. Involved in the addition of a carboxymethylaminomethyl (cmnm) group at the wobble position (U34) of certain tRNAs, forming tRNA-cmnm(5)s(2)U34. This Azoarcus sp. (strain BH72) protein is tRNA modification GTPase MnmE.